The following is a 722-amino-acid chain: Exocyst complex component 3-like protein 4 (722 aa).

2 disordered regions span residues 1–53 (MPSP…LGSL) and 92–131 (NDGP…KPEA). A compositionally biased stretch (basic and acidic residues) spans 34-46 (SRKEPNAHRKDGT). Ser-52 is modified (phosphoserine). Polar residues predominate over residues 113–122 (GVSQQASTGA). At Ser-513 the chain carries Phosphoserine.

This sequence belongs to the SEC6 family.

The polypeptide is Exocyst complex component 3-like protein 4 (EXOC3L4) (Homo sapiens (Human)).